A 640-amino-acid polypeptide reads, in one-letter code: Fructose-1,6-bisphosphatase class 3 (640 aa).

Belongs to the FBPase class 3 family. Mn(2+) serves as cofactor.

The enzyme catalyses beta-D-fructose 1,6-bisphosphate + H2O = beta-D-fructose 6-phosphate + phosphate. It functions in the pathway carbohydrate biosynthesis; gluconeogenesis. In Lactococcus lactis subsp. lactis (strain IL1403) (Streptococcus lactis), this protein is Fructose-1,6-bisphosphatase class 3.